Consider the following 156-residue polypeptide: Small ribosomal subunit protein uS7 (156 aa).

The protein belongs to the universal ribosomal protein uS7 family. In terms of assembly, part of the 30S ribosomal subunit. Contacts proteins S9 and S11.

Its function is as follows. One of the primary rRNA binding proteins, it binds directly to 16S rRNA where it nucleates assembly of the head domain of the 30S subunit. Is located at the subunit interface close to the decoding center, probably blocks exit of the E-site tRNA. In Nitrosomonas eutropha (strain DSM 101675 / C91 / Nm57), this protein is Small ribosomal subunit protein uS7.